The primary structure comprises 367 residues: DNA replication and repair protein RecF (367 aa).

30–37 (GANGSGKT) is an ATP binding site.

The protein belongs to the RecF family.

The protein localises to the cytoplasm. The RecF protein is involved in DNA metabolism; it is required for DNA replication and normal SOS inducibility. RecF binds preferentially to single-stranded, linear DNA. It also seems to bind ATP. The polypeptide is DNA replication and repair protein RecF (Pseudomonas fluorescens (strain Pf0-1)).